The chain runs to 152 residues: MTHIIIDGDACPVVDSIIDLTTETGIFVTIIRSFSHFSNQLYPPHVSTLYVDDGPDAVDYKIVQLSTKDDIVVTQDYGLASLLVDKVLIVMHHNGKIYNSKNIQQLLDKRYINAQIRKQGGRHKGPPPFTKQDQKVFEQSLLKVIHRIKELD.

It belongs to the UPF0178 family.

The chain is UPF0178 protein SaurJH9_0705 from Staphylococcus aureus (strain JH9).